Consider the following 427-residue polypeptide: Zinc finger protein 134 (427 aa).

A Glycyl lysine isopeptide (Lys-Gly) (interchain with G-Cter in SUMO2) cross-link involves residue Lys-20. The C2H2-type 1 zinc-finger motif lies at 50 to 72; that stretch reads LPCDICGPILKDILHLDEHQGTH. The C2H2-type 2; degenerate zinc-finger motif lies at 78–100; it reads HTCGACGRQFWFSANLHQYQKCY. Glycyl lysine isopeptide (Lys-Gly) (interchain with G-Cter in SUMO2) cross-links involve residues Lys-135 and Lys-139. 9 C2H2-type zinc fingers span residues 176 to 198, 204 to 226, 232 to 254, 260 to 282, 288 to 310, 316 to 338, 344 to 366, 372 to 394, and 400 to 422; these read YKCS…QRIH, YECS…QRIH, YECS…KRIH, YKCN…QRVH, YKCS…ESIH, YDCS…QRIH, FECI…QRVH, FVCS…QRVH, and YECS…QKVH.

The protein belongs to the krueppel C2H2-type zinc-finger protein family.

It is found in the nucleus. Its function is as follows. May be involved in transcriptional regulation. The sequence is that of Zinc finger protein 134 (ZNF134) from Homo sapiens (Human).